The sequence spans 276 residues: RNA-binding protein pno-1 (276 aa).

2 disordered regions span residues 1 to 30 (MATS…VPST) and 62 to 101 (DVVM…SRVV). A compositionally biased stretch (acidic residues) spans 8 to 27 (FDDEFPMEEGMPELLDDEDV). The region spanning 197 to 249 (GDHVSRAIGRIAGKDGRTKLVIENTTKTRIVVANTKIHILGAYQNLKLARNAV) is the KH domain.

It belongs to the PNO1 family. As to quaternary structure, part of the small subunit (SSU) processome, composed of more than 70 proteins and the RNA chaperone small nucleolar RNA (snoRNA) U3.

It localises to the nucleus. The protein resides in the nucleolus. Functionally, part of the small subunit (SSU) processome, first precursor of the small eukaryotic ribosomal subunit. During the assembly of the SSU processome in the nucleolus, many ribosome biogenesis factors, an RNA chaperone and ribosomal proteins associate with the nascent pre-rRNA and work in concert to generate RNA folding, modifications, rearrangements and cleavage as well as targeted degradation of pre-ribosomal RNA by the RNA exosome. Positively regulates dimethylation of two adjacent adenosines in the loop of a conserved hairpin near the 3'-end of 18S rRNA. The polypeptide is RNA-binding protein pno-1 (Caenorhabditis briggsae).